Here is a 390-residue protein sequence, read N- to C-terminus: (S)-8-oxocitronellyl enol synthase CYC2 (390 aa).

NADP(+) contacts are provided by residues 35–37 (TGI), 63–64 (RR), 81–82 (DI), 105–106 (TW), and glutamine 143. Residues lysine 147 and tyrosine 179 contribute to the active site. Residues lysine 147 and tyrosine 179 each coordinate substrate. NADP(+) contacts are provided by residues tyrosine 179 and 213 to 215 (SMM).

Belongs to the short-chain dehydrogenases/reductases (SDR) family. Highly divergent.

It carries out the reaction (S)-8-oxocitronellyl enol + NADP(+) = (6E)-8-oxogeranial + NADPH + H(+). It catalyses the reaction (S)-8-oxocitronellyl enol + NAD(+) = (6E)-8-oxogeranial + NADH + H(+). In terms of biological role, iridoid synthase that catalyzes the first step in generation of the iridoid ring scaffold using the linear monoterpene (6E)-8-oxogeranial as substrate. Iridoids comprise a large family of distinctive bicyclic monoterpenes that possess a wide range of pharmacological activities, including anticancer, anti-inflammatory, antifungal and antibacterial activities. In Camptotheca acuminata (Happy tree), this protein is (S)-8-oxocitronellyl enol synthase CYC2.